A 324-amino-acid polypeptide reads, in one-letter code: Dioxygenase tasH (324 aa).

The N-terminal stretch at 1–25 is a signal peptide; that stretch reads MRSMSLWMLIGPVTGIATWASLRYA. H50, H96, and H284 together coordinate Zn(2+).

It belongs to the DODA-type extradiol aromatic ring-opening dioxygenase family. As to quaternary structure, monomer. Zn(2+) serves as cofactor.

Functionally, dioxygenase; part of the gene cluster that mediates the biosynthesis of the tetramic acids Sch210971 and Sch210972, potential anti-HIV fungal natural product that contain a decalin core. The PKS module of tasS together with the enoylreductase tasC catalyze the formation of the polyketide unit which is then conjugated to 4-hydroxyl-4-methyl glutamate (HMG) by the condensation domain of the tasS NRPS module. One unique structural feature of Sch210971 and Sch210972 is the tetramic acid motif proposed to be derived from the non-proteinogenic amino acid HMG, by a Dieckmann-type condensation catalyzed by the reductase domain of tasS. The aldolase tasA catalyzes the aldol condensation of 2 molecules of pyruvic acid to yield the intermediate 4-hydroxyl-4-methyl-2-oxoglutarate (HMOG), which can then be stereoselectively transaminated, may be by tasG, to form HMG. The Diels-Alderase tas3 then uses the Dieckmann product of tasS as substrate and catalyzes the Diels-Alder cycloaddition to form the decalin ring of Sch210971 and Sch210972. This Hapsidospora irregularis protein is Dioxygenase tasH.